The chain runs to 513 residues: Maturase K (513 aa).

This sequence belongs to the intron maturase 2 family. MatK subfamily.

It localises to the plastid. The protein resides in the chloroplast. Its function is as follows. Usually encoded in the trnK tRNA gene intron. Probably assists in splicing its own and other chloroplast group II introns. This is Maturase K from Phaseolus vulgaris (Kidney bean).